The primary structure comprises 88 residues: Exodeoxyribonuclease 7 small subunit (88 aa).

The interval 69 to 88 (ALAEEADPEDGASGADGGGA) is disordered.

Belongs to the XseB family. Heterooligomer composed of large and small subunits.

It localises to the cytoplasm. It catalyses the reaction Exonucleolytic cleavage in either 5'- to 3'- or 3'- to 5'-direction to yield nucleoside 5'-phosphates.. Bidirectionally degrades single-stranded DNA into large acid-insoluble oligonucleotides, which are then degraded further into small acid-soluble oligonucleotides. The polypeptide is Exodeoxyribonuclease 7 small subunit (Streptomyces coelicolor (strain ATCC BAA-471 / A3(2) / M145)).